A 164-amino-acid polypeptide reads, in one-letter code: MIDIGLSKMALIGAVALIVIGPEKLPRVARTVGTLLGKAQRYVADVKAEVNRSMELDELRKMKDTVETAARDVHHSFQTHASEFQKDWESGTSDAAATGHDGILDPAALEGPSSRIVPTYKHPGKNWRLKRSATPQWYKARAGVRTKAQSGAARVARFRPRKFQ.

A helical transmembrane segment spans residues 1-21 (MIDIGLSKMALIGAVALIVIG). Residues 81 to 102 (ASEFQKDWESGTSDAAATGHDG) are disordered.

The protein belongs to the TatB family. The Tat system comprises two distinct complexes: a TatABC complex, containing multiple copies of TatA, TatB and TatC subunits, and a separate TatA complex, containing only TatA subunits. Substrates initially bind to the TatABC complex, which probably triggers association of the separate TatA complex to form the active translocon.

Its subcellular location is the cell inner membrane. In terms of biological role, part of the twin-arginine translocation (Tat) system that transports large folded proteins containing a characteristic twin-arginine motif in their signal peptide across membranes. Together with TatC, TatB is part of a receptor directly interacting with Tat signal peptides. TatB may form an oligomeric binding site that transiently accommodates folded Tat precursor proteins before their translocation. The chain is Sec-independent protein translocase protein TatB from Paracidovorax citrulli (strain AAC00-1) (Acidovorax citrulli).